Reading from the N-terminus, the 430-residue chain is Bifunctional protein GlmU (430 aa).

The tract at residues 1–227 (MISKTHTFVI…GEEATGINNR (227 aa)) is pyrophosphorylase. UDP-N-acetyl-alpha-D-glucosamine contacts are provided by residues Lys-25, Gln-74, 79 to 80 (GT), 104 to 106 (YGD), Gly-140, Glu-154, Asn-168, and Asn-225. Asp-106 is a binding site for Mg(2+). Residue Asn-225 participates in Mg(2+) binding. The interval 228–248 (NDLIKAEFYFQENKRKIFTDS) is linker. Residues 249-430 (GVTLVAPETV…REKQVTKRIK (182 aa)) are N-acetyltransferase. UDP-N-acetyl-alpha-D-glucosamine is bound by residues Arg-314 and Lys-332. His-344 acts as the Proton acceptor in catalysis. UDP-N-acetyl-alpha-D-glucosamine-binding residues include Tyr-347 and Asn-358. Acetyl-CoA is bound by residues Ala-361, 367–368 (NY), Ala-404, and Arg-421.

This sequence in the N-terminal section; belongs to the N-acetylglucosamine-1-phosphate uridyltransferase family. It in the C-terminal section; belongs to the transferase hexapeptide repeat family. As to quaternary structure, homotrimer. It depends on Mg(2+) as a cofactor.

It localises to the cytoplasm. It catalyses the reaction alpha-D-glucosamine 1-phosphate + acetyl-CoA = N-acetyl-alpha-D-glucosamine 1-phosphate + CoA + H(+). It carries out the reaction N-acetyl-alpha-D-glucosamine 1-phosphate + UTP + H(+) = UDP-N-acetyl-alpha-D-glucosamine + diphosphate. It participates in nucleotide-sugar biosynthesis; UDP-N-acetyl-alpha-D-glucosamine biosynthesis; N-acetyl-alpha-D-glucosamine 1-phosphate from alpha-D-glucosamine 6-phosphate (route II): step 2/2. The protein operates within nucleotide-sugar biosynthesis; UDP-N-acetyl-alpha-D-glucosamine biosynthesis; UDP-N-acetyl-alpha-D-glucosamine from N-acetyl-alpha-D-glucosamine 1-phosphate: step 1/1. It functions in the pathway bacterial outer membrane biogenesis; LPS lipid A biosynthesis. In terms of biological role, catalyzes the last two sequential reactions in the de novo biosynthetic pathway for UDP-N-acetylglucosamine (UDP-GlcNAc). The C-terminal domain catalyzes the transfer of acetyl group from acetyl coenzyme A to glucosamine-1-phosphate (GlcN-1-P) to produce N-acetylglucosamine-1-phosphate (GlcNAc-1-P), which is converted into UDP-GlcNAc by the transfer of uridine 5-monophosphate (from uridine 5-triphosphate), a reaction catalyzed by the N-terminal domain. This is Bifunctional protein GlmU from Wolbachia pipientis wMel.